A 463-amino-acid polypeptide reads, in one-letter code: UDP-N-acetylmuramoylalanine--D-glutamate ligase (463 aa).

Position 109-115 (109-115 (GTDGKST)) interacts with ATP.

The protein belongs to the MurCDEF family.

The protein localises to the cytoplasm. It catalyses the reaction UDP-N-acetyl-alpha-D-muramoyl-L-alanine + D-glutamate + ATP = UDP-N-acetyl-alpha-D-muramoyl-L-alanyl-D-glutamate + ADP + phosphate + H(+). The protein operates within cell wall biogenesis; peptidoglycan biosynthesis. In terms of biological role, cell wall formation. Catalyzes the addition of glutamate to the nucleotide precursor UDP-N-acetylmuramoyl-L-alanine (UMA). This Leptospira interrogans serogroup Icterohaemorrhagiae serovar Lai (strain 56601) protein is UDP-N-acetylmuramoylalanine--D-glutamate ligase.